Here is a 436-residue protein sequence, read N- to C-terminus: tRNA-2-methylthio-N(6)-dimethylallyladenosine synthase (436 aa).

One can recognise an MTTase N-terminal domain in the interval 1–115; sequence MRVFFKTYGC…IAEVLQKAAR (115 aa). [4Fe-4S] cluster-binding residues include Cys10, Cys46, Cys80, Cys151, Cys155, and Cys158. The Radical SAM core domain maps to 137 to 368; the sequence is RFSKHHAWIT…LELQKQINRE (232 aa). Residues 371 to 432 enclose the TRAM domain; that stretch reads MQYLGKVVEI…AGPLYGKLQK (62 aa).

It belongs to the methylthiotransferase family. MiaB subfamily. Monomer. Requires [4Fe-4S] cluster as cofactor.

The protein localises to the cytoplasm. The catalysed reaction is N(6)-dimethylallyladenosine(37) in tRNA + (sulfur carrier)-SH + AH2 + 2 S-adenosyl-L-methionine = 2-methylsulfanyl-N(6)-dimethylallyladenosine(37) in tRNA + (sulfur carrier)-H + 5'-deoxyadenosine + L-methionine + A + S-adenosyl-L-homocysteine + 2 H(+). Functionally, catalyzes the methylthiolation of N6-(dimethylallyl)adenosine (i(6)A), leading to the formation of 2-methylthio-N6-(dimethylallyl)adenosine (ms(2)i(6)A) at position 37 in tRNAs that read codons beginning with uridine. This chain is tRNA-2-methylthio-N(6)-dimethylallyladenosine synthase, found in Pseudothermotoga lettingae (strain ATCC BAA-301 / DSM 14385 / NBRC 107922 / TMO) (Thermotoga lettingae).